Consider the following 130-residue polypeptide: DVTWDKNIGNGKVFGTLGQNDDGLFGKAGFKQQFFNDDRGKFEGQAYGTRVLGPAGGTTNFGGRLDWSDKNANAALDISKQIGGRPNLSASGAGVWDFDKNTRLSAGGSLSTMGRGKPDVGVHAQFQHDF.

Hemolymph.

The protein localises to the secreted. Antibacterial protein active against Gram-negative bacteria. This chain is Gloverin, found in Hyalophora cecropia (Cecropia moth).